A 692-amino-acid chain; its full sequence is Methionine--tRNA ligase (692 aa).

Positions 26-36 match the 'HIGH' region motif; sequence PYANGSIHLGH. Residues Cys157, Cys160, Cys170, and Cys173 each coordinate Zn(2+). Residues 342-346 carry the 'KMSKS' region motif; sequence KMSKS. Lys345 is an ATP binding site. A tRNA-binding domain is found at 590-692; that stretch reads DFAKVDLRIA…SGAQPGMRVK (103 aa).

Belongs to the class-I aminoacyl-tRNA synthetase family. MetG type 1 subfamily. Homodimer. The cofactor is Zn(2+).

It is found in the cytoplasm. The enzyme catalyses tRNA(Met) + L-methionine + ATP = L-methionyl-tRNA(Met) + AMP + diphosphate. In terms of biological role, is required not only for elongation of protein synthesis but also for the initiation of all mRNA translation through initiator tRNA(fMet) aminoacylation. This Methylobacillus flagellatus (strain ATCC 51484 / DSM 6875 / VKM B-1610 / KT) protein is Methionine--tRNA ligase.